The sequence spans 188 residues: V-type proton ATPase subunit E (188 aa).

This sequence belongs to the V-ATPase E subunit family.

Its function is as follows. Produces ATP from ADP in the presence of a proton gradient across the membrane. This chain is V-type proton ATPase subunit E, found in Dictyoglomus turgidum (strain DSM 6724 / Z-1310).